We begin with the raw amino-acid sequence, 197 residues long: Guanylate kinase (197 aa).

Ser-2 is modified (N-acetylserine). Residues 4-186 enclose the Guanylate kinase-like domain; that stretch reads PRPVVLSGPS…AYAELKEALS (183 aa). 14–19 is an ATP binding site; that stretch reads GAGKST. 37–51 serves as a coordination point for substrate; the sequence is SHTTRNPRPGEENGK. Residues Arg-44, Arg-137, and Arg-148 contribute to the active site. Arg-137 is an ATP binding site. 171–172 is an ATP binding site; sequence ND.

The protein belongs to the guanylate kinase family. In terms of assembly, monomer. Interacts with RD3. As to expression, widely expressed.

It localises to the photoreceptor inner segment. The protein resides in the cytoplasm. It is found in the cytosol. The protein localises to the mitochondrion. It catalyses the reaction GMP + ATP = GDP + ADP. With respect to regulation, up-regulated by RD3. Functionally, catalyzes the phosphorylation of GMP to GDP. Essential enzyme for recycling GMP and indirectly, cyclic GMP (cGMP). Involved in the cGMP metabolism in photoreceptors. It may also have a role in the survival and growth progression of some tumors. In addition to its physiological role, GUK1 is essential for converting prodrugs used for the treatment of cancers and viral infections into their pharmacologically active metabolites, most notably acyclovir, ganciclovir, and 6-thioguanine and its closely related analog 6-mercaptopurine. The sequence is that of Guanylate kinase from Homo sapiens (Human).